Here is a 1020-residue protein sequence, read N- to C-terminus: UPF0182 protein jk1603 (1020 aa).

Pro residues predominate over residues methionine 1–serine 18. The tract at residues methionine 1–serine 23 is disordered. The next 7 membrane-spanning stretches (helical) occupy residues isoleucine 28–serine 48, leucine 73–leucine 93, phenylalanine 125–tryptophan 145, leucine 175–isoleucine 195, leucine 227–tyrosine 247, glutamine 272–leucine 292, and leucine 300–leucine 320. Positions glutamine 924–threonine 998 are disordered. Composition is skewed to basic and acidic residues over residues lysine 942–serine 961 and lysine 969–threonine 998.

Belongs to the UPF0182 family.

The protein localises to the cell membrane. The protein is UPF0182 protein jk1603 of Corynebacterium jeikeium (strain K411).